The following is a 199-amino-acid chain: Sulfocyanin (199 aa).

Residues 7-27 form a helical; Signal-anchor for type II membrane protein membrane-spanning segment; that stretch reads VLPVVVGILVVIIAVAVGVYV. Residues 79 to 188 form the Plastocyanin-like domain; that stretch reads NFNGTSSGSL…SGMWAVLVAS (110 aa). Positions 110, 171, 176, and 181 each coordinate Cu cation.

It belongs to the multicopper oxidase family.

It localises to the cell membrane. In terms of biological role, the 4 redox proteins SoxE, SoxF, SoxG and SoxH probably form part of a membrane respiratory complex together with SoxM, a catalytic subunit of cytochrome oxidase. The protein is Sulfocyanin (soxE) of Sulfolobus acidocaldarius (strain ATCC 33909 / DSM 639 / JCM 8929 / NBRC 15157 / NCIMB 11770).